Consider the following 439-residue polypeptide: Probable RNA-binding protein 23 (439 aa).

The interval 13-159 is disordered; it reads MLEAPYKKEE…PVREPVDNLS (147 aa). Residues 17–34 are compositionally biased toward basic and acidic residues; the sequence is PYKKEEDEQQRKEVKKDY. A compositionally biased stretch (low complexity) spans 36-57; sequence SNTTSSTSNSGNETSGSSTIGE. Basic residues predominate over residues 60 to 90; the sequence is KKKRSRSHNKSRDRKRSRSRDRDRYRRRNSR. Basic and acidic residues predominate over residues 103–125; the sequence is RSWDRRHGSESRSRDHRREDRVH. S128 and S149 each carry phosphoserine. Over residues 144 to 159 the composition is skewed to basic and acidic residues; the sequence is HFREKSPVREPVDNLS. RRM domains are found at residues 166-243 and 263-341; these read RTVF…ASQA and MRLY…HVTE.

Belongs to the splicing factor SR family. Aryl sulfonamide anticancer drugs, such as indisulam (E7070) or E7820, promote ubiquitination and subsequent degradation by the DCX(DCAF15) complex. Aryl sulfonamide anticancer drugs change the substrate specificity of DCAF15 by acting as a molecular glue that promotes binding between DCAF15 and weak affinity interactor RBM23. Highly expressed in placenta, liver, skeletal muscle, heart and kidney. Expressed at lower levels in the colon, thymus, spleen, small intestine and lung.

Its subcellular location is the nucleus. Its function is as follows. RNA-binding protein that acts both as a transcription coactivator and pre-mRNA splicing factor. Regulates steroid hormone receptor-mediated transcription, independently of the pre-mRNA splicing factor activity. This chain is Probable RNA-binding protein 23, found in Homo sapiens (Human).